Reading from the N-terminus, the 440-residue chain is MMAVEEEEVKEVLQKLQELVDQLYSFRECYFETHSVDDAGRKQQDVREEMEKTLQQMEEVVGSVQGNAQVLMLTGKALNVTPDYSPKAEELLSKAVKLEPKLVEAWNQLGEVYWKKGDVAAAHTCFSGALTHCKNKVSLQNLSMVLRQLRTDSGDEHSRHVMDSVRQAKLAVQMDILDGRSWYILGNAYLSLYFNTGQNPKISQQALSAYAQAEKVDRTASSNPDLHLNRATLHKYEENYGEALEGFSRAAALDPAWPEPWQREQQLLDFLTRLTSFLESKGKVKTKKLQSMLGNLRPAHLGPCGDGRYQSASGQKVTLERKPLNALQPGVNSGAVVLGKVVFSLTTEEKVPFTFGLVDSDGPCYAVMVYNMVQSWGVLIGDSVAIPEPNLRLHRIQHKGKDYSFSSVRVETPLLLVVNGKPQGSSSQAAATVASRPQCE.

TPR repeat units follow at residues 7 to 61 (EEVK…EEVV), 68 to 98 (AQVLMLTGKALNVTPDYSPKAEELLSKAVKL), 103 to 130 (VEAWNQLGEVYWKKGDVAAAHTCFSGAL), 136 to 174 (KVSLQNLSMVLRQLRTDSGDEHSRHVMDSVRQAKLAVQM), and 179 to 216 (GRSWYILGNAYLSLYFNTGQNPKISQQALSAYAQAEKV). Positions 13–24 (LQKLQELVDQLY) match the Nuclear export signal motif. Residue serine 203 is modified to Phosphoserine; by ATM. Position 221 is a phosphoserine; by CHEK2 (serine 221). Residues 224-253 (PDLHLNRATLHKYEENYGEALEGFSRAAAL) form a TPR 6 repeat. A mediates interaction with 28S rRNA of ribosome-coding tubulin region spans residues 285–287 (KTK).

In terms of assembly, interacts with JMY and p300/EP300; the interaction occurs in the nucleus and augments the association between JMY and p300/EP300 in response to DNA damage. Interacts with PRMT5; the interaction is DNA damage-dependent and promotes PRMT5 interaction with p53/TP53 and subsequent methylation. Forms a complex with HSF1 and p300/EP300; these interactions augment chromatin-bound HSF1 and p300/EP300 histone acetyltransferase activity, resulting in enhanced heat-shock-responsive transcription. Interacts with JMY; the interaction occurs in the cytoplasm and results in the inhibition of JYM's nucleation activity. Interacts with ribosome-coding tubulin (via 60S subunit 28S rRNA and protein uL24/RPL26) and the N-terminal of nascent tubulin polypeptide (via alpha-tubulin MREC motif and beta-tubulin MREI motif); these interactions result in tubulin mRNA-targeted degradation. Interacts with ATP5F1B; the interaction occurs in the mitochondria and results in ATP production decrease. Interacts with p53/TP53; the interaction occurs in the mitochondria and results in increased apoptosis. Post-translationally, phosphorylation by ATM kinase induces nuclear accumulation while interfering with nuclear export, and phosphorylation by CHEK2 kinase enhances nuclear stability.

The protein localises to the nucleus. It localises to the cytoplasm. Its subcellular location is the cytoplasmic vesicle. It is found in the mitochondrion matrix. In terms of biological role, cofactor involved in the regulation of various cellular mechanisms such as actin regulation, autophagy, chromatin regulation and DNA repair. In physiological conditions, interacts with cofactor JMY in the cytoplasm which prevents JMY's actin nucleation activity and ability to activate the Arp2/3 complex. Acts as a negative regulator of nutrient stress-induced autophagy by inhibiting JMY's interaction with MAP1LC3B, thereby preventing autophagosome formation. Involves in tubulin autoregulation by promoting its degradation in response to excess soluble tubulin. To do so, associates with the active ribosome near the ribosome exit tunnel and with nascent tubulin polypeptides early during their translation, triggering tubulin mRNA-targeted degradation. Following DNA damage, phosphorylated by DNA damage responsive protein kinases ATM and CHEK2, leading to its nuclear accumulation and stability. Nuclear TTC5/STRAP promotes the assembly of a stress-responsive p53/TP53 coactivator complex, which includes the coactivators JMY and p300, thereby increasing p53/TP53-dependent transcription and apoptosis. Also recruits arginine methyltransferase PRMT5 to p53/TP53 when DNA is damaged, allowing PRMT5 to methylate p53/TP53. In DNA stress conditions, also prevents p53/TP53 degradation by E3 ubiquitin ligase MDM2. Upon heat-shock stress, forms a chromatin-associated complex with heat-shock factor 1 HSF1 and p300/EP300 to stimulate heat-shock-responsive transcription, thereby increasing cell survival. Mitochondrial TTC5/STRAP interacts with ATP synthase subunit beta ATP5F1B which decreased ATP synthase activity and lowers mitochondrial ATP production, thereby regulating cellular respiration and mitochondrial-dependent apoptosis. Mitochondrial TTC5/STRAP also regulates p53/TP53-mediated apoptosis. This Bos taurus (Bovine) protein is Tetratricopeptide repeat protein 5 (TTC5).